The chain runs to 97 residues: YcgL domain-containing protein PSPPH_1548 (97 aa).

One can recognise a YcgL domain in the interval 3 to 87; sequence RICSIYRSPK…AEDDYIEHLP (85 aa).

This is YcgL domain-containing protein PSPPH_1548 from Pseudomonas savastanoi pv. phaseolicola (strain 1448A / Race 6) (Pseudomonas syringae pv. phaseolicola (strain 1448A / Race 6)).